A 71-amino-acid chain; its full sequence is Large ribosomal subunit protein bL31 (71 aa).

Cys-16, Cys-18, Cys-37, and Cys-40 together coordinate Zn(2+).

This sequence belongs to the bacterial ribosomal protein bL31 family. Type A subfamily. Part of the 50S ribosomal subunit. It depends on Zn(2+) as a cofactor.

Functionally, binds the 23S rRNA. The chain is Large ribosomal subunit protein bL31 from Marinomonas sp. (strain MWYL1).